The chain runs to 556 residues: Genetic interactor of prohibitins 3, mitochondrial (556 aa).

The N-terminal 21 residues, 1 to 21 (MLNLCHALRGVRQFSCSVIVK), are a transit peptide targeting the mitochondrion. The 193-residue stretch at 113–305 (ESTLNDILNY…LFDLPGYSTS (193 aa)) folds into the CP-type G domain.

The protein belongs to the TRAFAC class YlqF/YawG GTPase family. GEP3 subfamily.

The protein localises to the mitochondrion. Interacts genetically with prohibitins and thus may be involved in the mitochondrial lipid metabolism. The protein is Genetic interactor of prohibitins 3, mitochondrial (GEP3) of Saccharomyces cerevisiae (strain YJM789) (Baker's yeast).